The following is a 136-amino-acid chain: uncharacterized protein (136 aa).

Residues 1–51 (MAANATSGRPPSIALRQPEATGWRRGIPAKVATKGTQAEREGDVRSGGRAR) are disordered. Residues 37–46 (QAEREGDVRS) are compositionally biased toward basic and acidic residues.

This is an uncharacterized protein from Homo sapiens (Human).